An 888-amino-acid chain; its full sequence is Phosphoenolpyruvate carboxylase (888 aa).

Catalysis depends on residues histidine 144 and lysine 553.

Belongs to the PEPCase type 1 family. Mg(2+) is required as a cofactor.

The enzyme catalyses oxaloacetate + phosphate = phosphoenolpyruvate + hydrogencarbonate. Its function is as follows. Forms oxaloacetate, a four-carbon dicarboxylic acid source for the tricarboxylic acid cycle. This Alcanivorax borkumensis (strain ATCC 700651 / DSM 11573 / NCIMB 13689 / SK2) protein is Phosphoenolpyruvate carboxylase.